We begin with the raw amino-acid sequence, 498 residues long: Glycerol kinase (498 aa).

Thr-12 contributes to the ADP binding site. ATP is bound by residues Thr-12, Thr-13, and Ser-14. Residue Thr-12 participates in sn-glycerol 3-phosphate binding. Arg-16 serves as a coordination point for ADP. Residues Arg-82, Glu-83, Tyr-134, and Asp-244 each contribute to the sn-glycerol 3-phosphate site. Positions 82, 83, 134, 244, and 245 each coordinate glycerol. The ADP site is built by Thr-266 and Gly-309. Positions 266, 309, 313, and 410 each coordinate ATP. Residues Gly-410 and Asn-414 each contribute to the ADP site.

Belongs to the FGGY kinase family. In terms of assembly, homotetramer and homodimer (in equilibrium).

The catalysed reaction is glycerol + ATP = sn-glycerol 3-phosphate + ADP + H(+). It participates in polyol metabolism; glycerol degradation via glycerol kinase pathway; sn-glycerol 3-phosphate from glycerol: step 1/1. Activated by phosphorylation and inhibited by fructose 1,6-bisphosphate (FBP). Functionally, key enzyme in the regulation of glycerol uptake and metabolism. Catalyzes the phosphorylation of glycerol to yield sn-glycerol 3-phosphate. This Natranaerobius thermophilus (strain ATCC BAA-1301 / DSM 18059 / JW/NM-WN-LF) protein is Glycerol kinase.